The sequence spans 337 residues: Eukaryotic translation initiation factor 3 subunit H (337 aa).

An MPN domain is found at 21-153; the sequence is VQCDGLAVMK…LKAYRLTPQA (133 aa).

It belongs to the eIF-3 subunit H family. In terms of assembly, component of the eukaryotic translation initiation factor 3 (eIF-3) complex. The eIF-3 complex interacts with pix. Interacts with mxt.

The protein localises to the cytoplasm. In terms of biological role, component of the eukaryotic translation initiation factor 3 (eIF-3) complex, which is involved in protein synthesis of a specialized repertoire of mRNAs and, together with other initiation factors, stimulates binding of mRNA and methionyl-tRNAi to the 40S ribosome. The eIF-3 complex specifically targets and initiates translation of a subset of mRNAs involved in cell proliferation. The polypeptide is Eukaryotic translation initiation factor 3 subunit H (Drosophila willistoni (Fruit fly)).